A 432-amino-acid chain; its full sequence is EF-hand calcium-binding domain-containing protein 3 (432 aa).

2 EF-hand domains span residues 45–80 and 81–116; these read AQLE…LGMN and LNTY…KKLF. D94, D96, D98, K100, and D105 together coordinate Ca(2+). A Phosphotyrosine modification is found at Y273. Residues 394-432 form a disordered region; that stretch reads SMNKSSPSNSGLSSPSDFSESDPETGRKRKRKSSRGFRQ. Residues 395-411 show a composition bias toward low complexity; it reads MNKSSPSNSGLSSPSDF. The span at 420–432 shows a compositional bias: basic residues; it reads RKRKRKSSRGFRQ.

The polypeptide is EF-hand calcium-binding domain-containing protein 3 (Efcab3) (Mus musculus (Mouse)).